A 238-amino-acid polypeptide reads, in one-letter code: Uridylate kinase (238 aa).

12 to 15 is a binding site for ATP; that stretch reads KLSG. Gly54 lines the UMP pocket. Residues Gly55 and Arg59 each coordinate ATP. Residues Asp74 and 135-142 each bind UMP; that span reads TGNPFFTT. ATP is bound by residues Thr162, Asn163, Tyr168, and Asp171.

It belongs to the UMP kinase family. Homohexamer.

The protein resides in the cytoplasm. The catalysed reaction is UMP + ATP = UDP + ADP. Its pathway is pyrimidine metabolism; CTP biosynthesis via de novo pathway; UDP from UMP (UMPK route): step 1/1. With respect to regulation, inhibited by UTP. Its function is as follows. Catalyzes the reversible phosphorylation of UMP to UDP. This Rhodopseudomonas palustris (strain HaA2) protein is Uridylate kinase.